The primary structure comprises 78 residues: Large ribosomal subunit protein bL28 (78 aa).

The protein belongs to the bacterial ribosomal protein bL28 family.

The polypeptide is Large ribosomal subunit protein bL28 (Acaryochloris marina (strain MBIC 11017)).